Here is a 375-residue protein sequence, read N- to C-terminus: Alpha-2,8-sialyltransferase 8B (375 aa).

Residues 1 to 6 (MQLQFR) lie on the Cytoplasmic side of the membrane. A helical; Signal-anchor for type II membrane protein transmembrane segment spans residues 7–23 (SWMLAALTLLVVFLIFA). The Lumenal segment spans residues 24–375 (DISEIEEEIG…LTVGQCDGAT (352 aa)). N-linked (GlcNAc...) asparagine glycans are attached at residues Asn-60, Asn-72, Asn-89, and Asn-134. Disulfide bonds link Cys-157–Cys-307 and Cys-171–Cys-371. Asn-162 and Asn-185 together coordinate CMP-N-acetyl-beta-neuraminate. 2 N-linked (GlcNAc...) asparagine glycosylation sites follow: Asn-219 and Asn-234. The CMP-N-acetyl-beta-neuraminate site is built by Thr-294, Thr-295, Gly-296, Trp-316, Tyr-329, and His-330. His-346 (proton donor/acceptor) is an active-site residue.

This sequence belongs to the glycosyltransferase 29 family. Autopolysialylated. Autopolysialylation is not a prerequisite for the polysialylation acitity, but enhances the polysialylation acitity.

The protein localises to the golgi apparatus membrane. Its subcellular location is the secreted. It localises to the cell membrane. The catalysed reaction is [N-acetyl-alpha-D-neuraminosyl-(2-&gt;8)](n) + CMP-N-acetyl-beta-neuraminate = [N-acetyl-alpha-D-neuraminosyl-(2-&gt;8)](n+1) + CMP + H(+). The protein operates within protein modification; protein glycosylation. Catalyzes the transfer of a sialic acid from a CMP-linked sialic acid donor onto a terminal alpha-2,3-, alpha-2,6-, or alpha-2,8-linked sialic acid of an N-linked glycan acceptor through alpha-2,8-linkages. Therefore, participates in polysialic acid synthesis on various sialylated N-acetyllactosaminyl oligosaccharides (alpha-2,3-, alpha-2,6-, or alpha-2,8-linked sialic acid), including NCAM1, NCAM1 N-glycans, FETUB N-glycans, and to a lesser extent sialylparagloboside (SPG) and AHSG, which does not require the initial addition of an alpha 2,8-sialic acid. However, does not exhibit sialic acid-polymerase activity. Catalyzes polysialic acid synthesis in the hippocampal on NCAM1 and supports neurite outgrowth. ST8SIA2-mediated polysialylation influences on oligodendrocyte differentiation and may promote the integrity of myelin and axons. This is Alpha-2,8-sialyltransferase 8B from Pan troglodytes (Chimpanzee).